Reading from the N-terminus, the 630-residue chain is Coiled-coil domain-containing protein 120 (630 aa).

Residues Arg31 to Glu70 form an involved in CYTH2-binding region. The stretch at Glu109–Leu173 forms a coiled coil. Composition is skewed to low complexity over residues His212–Gly222 and Ala282–Ser297. Disordered stretches follow at residues His212–Arg435 and Gly457–Leu534. Over residues Arg326–Gln335 the composition is skewed to polar residues. Phosphoserine occurs at positions 358 and 360. Low complexity predominate over residues Ala421 to Pro434. Residue Arg435 is modified to Omega-N-methylarginine.

As to quaternary structure, interacts with NIN and CEP170; leading to recruit them to centrosomes. Directly interacts with CYTH2; this interaction stabilizes CCDC120, possibly by preventing ubiquitination. In terms of processing, ubiquitinated; interaction with CYTH2 may prevent ubiquitination.

It localises to the cytoplasm. The protein resides in the cytoskeleton. The protein localises to the microtubule organizing center. Its subcellular location is the centrosome. It is found in the centriole. It localises to the cell projection. The protein resides in the neuron projection. The protein localises to the growth cone. Its subcellular location is the endosome. In terms of biological role, centriolar protein required for centriole subdistal appendage assembly and microtubule anchoring in interphase cells. Together with CCDC68, cooperate with subdistal appendage components ODF2, NIN and CEP170 for hierarchical subdistal appendage assembly. Recruits NIN and CEP170 to centrosomes. Also required for neurite growth. Localizes CYTH2 to vesicles to allow its transport along neurites, and subsequent ARF6 activation and neurite growth. The polypeptide is Coiled-coil domain-containing protein 120 (CCDC120) (Homo sapiens (Human)).